The sequence spans 159 residues: Phosphopantetheine adenylyltransferase (159 aa).

Position 10 (threonine 10) interacts with substrate. ATP contacts are provided by residues 10–11 (TF) and histidine 18. Substrate contacts are provided by lysine 42, methionine 74, and arginine 88. ATP is bound by residues 89-91 (GLR), glutamate 99, and 124-130 (WSFISSS).

Belongs to the bacterial CoaD family. Homohexamer. Mg(2+) serves as cofactor.

Its subcellular location is the cytoplasm. The catalysed reaction is (R)-4'-phosphopantetheine + ATP + H(+) = 3'-dephospho-CoA + diphosphate. The protein operates within cofactor biosynthesis; coenzyme A biosynthesis; CoA from (R)-pantothenate: step 4/5. Its function is as follows. Reversibly transfers an adenylyl group from ATP to 4'-phosphopantetheine, yielding dephospho-CoA (dPCoA) and pyrophosphate. The protein is Phosphopantetheine adenylyltransferase of Escherichia coli O7:K1 (strain IAI39 / ExPEC).